The chain runs to 269 residues: Formamidopyrimidine-DNA glycosylase (269 aa).

Pro2 (schiff-base intermediate with DNA) is an active-site residue. Catalysis depends on Glu3, which acts as the Proton donor. The Proton donor; for beta-elimination activity role is filled by Lys57. Residues His90, Arg109, and Lys150 each coordinate DNA. Residues 235 to 269 (QVYGKGGKPCPRCDNPLSEMKIGQRASVFCSECQK) form an FPG-type zinc finger. The active-site Proton donor; for delta-elimination activity is Arg259.

Belongs to the FPG family. Monomer. Requires Zn(2+) as cofactor.

It catalyses the reaction Hydrolysis of DNA containing ring-opened 7-methylguanine residues, releasing 2,6-diamino-4-hydroxy-5-(N-methyl)formamidopyrimidine.. It carries out the reaction 2'-deoxyribonucleotide-(2'-deoxyribose 5'-phosphate)-2'-deoxyribonucleotide-DNA = a 3'-end 2'-deoxyribonucleotide-(2,3-dehydro-2,3-deoxyribose 5'-phosphate)-DNA + a 5'-end 5'-phospho-2'-deoxyribonucleoside-DNA + H(+). In terms of biological role, involved in base excision repair of DNA damaged by oxidation or by mutagenic agents. Acts as a DNA glycosylase that recognizes and removes damaged bases. Has a preference for oxidized purines, such as 7,8-dihydro-8-oxoguanine (8-oxoG). Has AP (apurinic/apyrimidinic) lyase activity and introduces nicks in the DNA strand. Cleaves the DNA backbone by beta-delta elimination to generate a single-strand break at the site of the removed base with both 3'- and 5'-phosphates. The polypeptide is Formamidopyrimidine-DNA glycosylase (Photobacterium profundum (strain SS9)).